A 321-amino-acid polypeptide reads, in one-letter code: Auxin-responsive protein IAA8 (321 aa).

The short motif at 54–58 (LRLGL) is the EAR-like (transcriptional repression) element. The 103-residue stretch at 199-301 (VLFVKVSMDG…TCQKLKIMKG (103 aa)) folds into the PB1 domain.

It belongs to the Aux/IAA family. As to quaternary structure, homodimers and heterodimers. Interacts with TPL. Highly expressed in the whole plant.

The protein localises to the nucleus. Aux/IAA proteins are short-lived transcriptional factors that function as repressors of early auxin response genes at low auxin concentrations. Repression is thought to result from the interaction with auxin response factors (ARFs), proteins that bind to the auxin-responsive promoter element (AuxRE). Formation of heterodimers with ARF proteins may alter their ability to modulate early auxin response genes expression. The protein is Auxin-responsive protein IAA8 (IAA8) of Arabidopsis thaliana (Mouse-ear cress).